A 145-amino-acid polypeptide reads, in one-letter code: Large ribosomal subunit protein uL16 (145 aa).

It belongs to the universal ribosomal protein uL16 family. As to quaternary structure, part of the 50S ribosomal subunit.

Functionally, binds 23S rRNA and is also seen to make contacts with the A and possibly P site tRNAs. This is Large ribosomal subunit protein uL16 from Lactobacillus johnsonii (strain CNCM I-12250 / La1 / NCC 533).